The following is a 573-amino-acid chain: Hemagglutinin-neuraminidase (573 aa).

The Intravirion segment spans residues 1-27 (MQDSHGNTQILNQANSMVKRTWRLLFR). The helical transmembrane segment at 28 to 48 (IATLILLVSIFVLSLIIVLQS) threads the bilayer. At 49–573 (TPGNLQNDIN…DFQITLFLAA (525 aa)) the chain is on the virion surface side. 3 disulfide bridges follow: C173–C197, C187–C248, and C239–C252. An involved in neuraminidase activity region spans residues 235–240 (NRKSCS). Residues N258, N330, N339, and N347 are each glycosylated (N-linked (GlcNAc...) asparagine; by host). Cystine bridges form between C345-C466, C377-C387, and C460-C470. A glycan (N-linked (GlcNAc...) asparagine; by host) is linked at N433. N502 and N530 each carry an N-linked (GlcNAc...) asparagine; by host glycan. C540 and C551 are joined by a disulfide.

This sequence belongs to the paramyxoviruses hemagglutinin-neuraminidase family. As to quaternary structure, homotetramer; composed of disulfide-linked homodimers. Interacts with F protein trimer.

The protein resides in the virion membrane. The protein localises to the host cell membrane. It carries out the reaction Hydrolysis of alpha-(2-&gt;3)-, alpha-(2-&gt;6)-, alpha-(2-&gt;8)- glycosidic linkages of terminal sialic acid residues in oligosaccharides, glycoproteins, glycolipids, colominic acid and synthetic substrates.. Functionally, attaches the virus to sialic acid-containing cell receptors and thereby initiating infection. Binding of HN protein to the receptor induces a conformational change that allows the F protein to trigger virion/cell membranes fusion. Its function is as follows. Neuraminidase activity ensures the efficient spread of the virus by dissociating the mature virions from the neuraminic acid containing glycoproteins. This is Hemagglutinin-neuraminidase (HN) from Homo sapiens (Human).